The sequence spans 314 residues: Ribosomal protein L11 methyltransferase (314 aa).

Residues Thr163, Gly184, Asp206, and Asn248 each coordinate S-adenosyl-L-methionine.

The protein belongs to the methyltransferase superfamily. PrmA family.

It is found in the cytoplasm. It carries out the reaction L-lysyl-[protein] + 3 S-adenosyl-L-methionine = N(6),N(6),N(6)-trimethyl-L-lysyl-[protein] + 3 S-adenosyl-L-homocysteine + 3 H(+). Its function is as follows. Methylates ribosomal protein L11. The protein is Ribosomal protein L11 methyltransferase of Lactobacillus delbrueckii subsp. bulgaricus (strain ATCC 11842 / DSM 20081 / BCRC 10696 / JCM 1002 / NBRC 13953 / NCIMB 11778 / NCTC 12712 / WDCM 00102 / Lb 14).